Consider the following 82-residue polypeptide: MSDLTSAASVLAAALAVGLAAIGPGIGQGTAAGQAVEGIARQPEAEGKIRGTLLLSLAFMEALTIYGLVVALVLLFANPFAG.

A run of 2 helical transmembrane segments spans residues 7–27 (AASVLAAALAVGLAAIGPGIG) and 57–77 (LAFMEALTIYGLVVALVLLFA).

The protein belongs to the ATPase C chain family. In terms of assembly, F-type ATPases have 2 components, F(1) - the catalytic core - and F(0) - the membrane proton channel. F(1) has five subunits: alpha(3), beta(3), gamma(1), delta(1), epsilon(1). F(0) has four main subunits: a(1), b(1), b'(1) and c(10-14). The alpha and beta chains form an alternating ring which encloses part of the gamma chain. F(1) is attached to F(0) by a central stalk formed by the gamma and epsilon chains, while a peripheral stalk is formed by the delta, b and b' chains.

Its subcellular location is the cellular thylakoid membrane. In terms of biological role, f(1)F(0) ATP synthase produces ATP from ADP in the presence of a proton or sodium gradient. F-type ATPases consist of two structural domains, F(1) containing the extramembraneous catalytic core and F(0) containing the membrane proton channel, linked together by a central stalk and a peripheral stalk. During catalysis, ATP synthesis in the catalytic domain of F(1) is coupled via a rotary mechanism of the central stalk subunits to proton translocation. Functionally, key component of the F(0) channel; it plays a direct role in translocation across the membrane. A homomeric c-ring of between 10-14 subunits forms the central stalk rotor element with the F(1) delta and epsilon subunits. This is ATP synthase subunit c from Synechococcus sp. (strain WH7803).